The primary structure comprises 13477 residues: MQLLGLLSILWMLKSSPGATGTLSTATSTSHVTFPRAEATRTALSNSPHSRYLAEWPQGVPQLASPAPGHRENAPMTLTTSPHDTLISETLLSSLVSSNTSTTPTSKFAFKVETTPPTVLVYLATTECVYPTSFIITISHPTSICVTTTQVTFTSSYTPTPVTQKPVTTVTRTYPMTTTEKGTSAMISSPSTTTARETPIVTVTPSSSVSATDTTFHTTISSTTRTTERTPLPTGSIHTTMSPTPVFTTLKTAVTSTSPITSTITSTNTVTSMTTTTSRPTATNTLSSLMSNILSSTPVPSTEMTTSHTTDTNPLSTLVTTLPTTITRSTPTSETTYPASPTSTVTDSTTEITYSTVLTGTLSPTTTLPPTSSSQQTTETPMTPTTKLVTTTTETTSQSSLNFSSSAIYSTVSTSTTAISSLPPTSGTMVTSTNIVPTADLKPELILLEVHDQRIQAKNPRYSQTPFTSSTATSPETTTLTCTNDISTESLTTAMTSTTPVISAITPKTTVTSMTTTASGPTTTNTLSSLTSSILSSTPAPNTEVITSHTTTTTPPSTLVTTLPTAIARSTPTSETTYPISPTGTVTDSMTEITYSTSMTGTWSTATTLPLTSCSLPTIETATTPTTNLGNTTTETTSHSTPSFTSSAIYSTVNISTTTISSFPPSSGTMVTFTTMNPSSLSTDISTTTLKNITQPSVGSTGFLTAATDLTSTFTVSSSSAMSTSVTPSAPSIQNKEISTLVSTTTTTSPTERMTLTSTENTPTSYILTTSPVTYSFSPSMSASSDWTTDTESISSAPAITSTLHTTAESTLAPTTTNSFTTSANMEPPSTAVATTGTGQSTFTSSTATFLETTTLTPTTDISTESFMTPMISTTPITSSMTLRNTMTSMTTAASRPTTTNTLSSLTSSILSSTPVPSTEVITSQTTNTTSPSTLVTTLPTTITTSTPTSETTYSTSPTSTVTDSTTETTYSTSITGTLSTEISLPATTSSLITKGISMTSTRNLVTTTNENTSHSTPTFTLTIHSTISTSTTAISSVPTTSGPIVTSTTMTPSSLTADIPTTTLTTIAQPSMGSTVFLTTATDLASTFTVSSSSAMSASVIPSSPSIQNTETSSLVNMTSANTPSVRPNFASTHSTLTSSLLMTFPETYSFSPSMSASNDRTTHTESISSPPASTSTLQTTAEYTLAPTTTTSFTTPRTMELPLSTVATRGTGQTTFTSPTATFSETTTLTPTTDISTESLTTAMTSPPNNVSVTSTNIVTSMTTTTSPHTTTHSFTSLTSMTLSSTPVPSTEAITSGITNTIPASTLVTTLPTPNASSVTTFETTYPNSPTGPGTNSTTKITYPITMTETSSNATSLPLISPSVSTAETAKTPTTILVTTTTKTTSHSTTSFTSSTIYSTGSTYTTAITSVPTTLGNMVTSTSRIPSSLSTDIPTSQPTTITPSSVGITGSLPMMTDLTSVYTVSSMSARLTTVIPSSPTVQNTETSSFVSMTSATTPSERPTFTSTENTPTWSLLTSFPMTHSFSSISASSAGTTHTESISSPPATTSTLHTTAESTLSPTITSFTTSTTREPPSTSVATTGTGQTTFPSSTATFPETTTLTPTIDISTESLTTAMTSTPPITSSVTPTNTVTSMTTTTSWPTASNMLSSLTGSILSSTPVPSTEVITSQTTNTTRPSTLVMTLPTTITTSTPTSETTYSTSPTSTVTDSMTETTYSTSIAGTLSTEISLPATTSSLTTKGTSTISTRNLVTTTNETTSHSTPSFTSTIHSTVSTSTTAISSVSTTSGPMVTSTTMTLSSLTTDIPTTTLTTITQPSVGSTAFLTTASGLTSTFTVSSSSAMSTSVIPSSPNIQNTETSTLVSTTIAVSPTERTTLTSTKKTLTSSALTRFPVTYPFSSSTSASSDLTTDMESISSLPAITSTLHTTAESTPAPTSITSFTTSATMEPPSSSVAATDTGQTTFTSSTATFPETITLTPNTNMSRESLMTPMTSTTPITSAITPTNTVTSMTTMTSPPTTTNSFTSLSSKILSSTPVPSTEAIISGTTNTIPPSTLVTTLPTPNASSMTTSETTYPNSPTGPVTNSMSKISYPASMTQTSSTATSLPPNSPSGSTTEIAKSPTTNLVTNAIKATSHTTTTYTSSTIYFTASTYTSAMTSVSLGTMVTSTSMTPSTVSTSIPTSQPKTVNSSSGGITGSLPMMTDLTSGYTVSSMSALPTTVIPTSLTVQNTETSIFVSMTSATTPSGRPTFTSTVNTPTRSLLTSFPTTHLFSSSMSESSAGTTHTESISSPPATTSTLHTTAESTPSCTTTTSFITSTTMEPLSTIVATTGTVKTTVTSSTATFRETTTLTSTTDISTESLMTAMTSTTRLTSAITSKTTLTSLKTTASRPTANSTLSSLTSSILSSTLVPSTDMITSHTTNLTRSSPLLATLPTTITRSTPTSETTYPTSPTSTVKGSTTSIRYSTSMTGTLSMETSLPPTSSSLPTTETATTPTTNLVTTEITSHSTPSFSSSTIHSTVSTPTTVISSGPPTSGTIVTSITVTPSSLSTDIPLTTPTTITHHSVGSTESLLTATDLTSTFTVSSSSAMSTSDIPSSPSIQNTETSSLVSMTSATIPSVRPTFTSTHNTLTSSLLTTFPGTYSFSSSMSASSDGTTHTETITSLPASTSTLHTTAESTTAHTTTTSFTTSTTMESPSSSVATTSTGQTTFSSSTATFTETTTLTPTTDFSEETLTTAMTSTPPITSSITPTNTVTSMTTMTSWPTATNTLSSLTTNILSSTPVPSTERTTSHTTNINPVSTLVTTLPTTITRSTPTSETTYPISSTSTVTESTTEITYSTTMTETSSSATSLPLTSPLVSTTETAKTPTTILVTTTTKTTSHSTTSFTSSTVYSTASTHTTAITSVPTTLGTMVTSTSRIPSSLSTDIPTSQPTTITPSSVGITGSLPMMTDLTSVYTVSSMSARPTSVIPSSPTVQNTETSIFVSMMSATTPSGGSTFTSTENTPTRSLLTSFPVTHSFSSSMSASSVGTTHTQSISSPPAITSTLHTTAESTPSPTTTMSFTTFTKMETPSSTVATTGTGQTTFTSSTATSPETNTLTPTPDISTGSFKTAVSSTPPITSSVTSTYTVTFMTTTAPLPTATNTLPSFTSSVSSSMTVPSTEAIASDTTNTTPLSTLVTIFSNSDTSSTPTSETTYPTSLTSALADSTNRITYSTSVTGTLSTVTSLRPTSPSLPTTVTATIPTTNLVTKTTKTTSHSTPSFTSVITTTKTTSHNPPSFTSRISTTEITSHSSSFTSLITTTKTTSHSTPSFTSPIATTKTSSHSSPSFTSSIATLETTSHSTPSFTSSITTNSHSTPRFSSSIATRETTSHSTSSFTPSIATTKTNSNSTPSFTSLIATTKITTHSTPSLTSLITTTETTSHSTPSFTSSMATTKTTSHSTPSFTSPIATRETTSHSTPSFTSLITTTKTTSHSTPSFTSLITIIETTSHISSFTSSIATTETTSHSTPSITSLIVTKTTSHSTPSFTSIATTETTSHSTTSFTSSTATTETTSRSTPSFTSLINTTETTSHSTPSFISLITTTETASYSTSSFSSLITTTRTTSQSTPSLTSSITTAETISYSSPSFPSLITITKSTSHSTASFSSSITTTETNLHSTPSFTSSTTTTETASHSTSSFTSSITTTKATSHSTPSFTSSIATTETTSHNTPNITTSISTTATTFHSTPRFTSSITTIETPSHGTPSFTSSITSTETTSHSSPSFISSITTTEITSHSTPRFTSSITTMETPSHSTPNFTSSITTAETTSHRTSSFTFSITNTKTTSHSTSIFTSSIITETSSHSSPSVTSAITTTETTSHNTPSYTFSIATTKNTSQSTPSFTSSIITTETIPQSTPSFTSCITTNKTIPHSTPSLTSVITTTKTTSNSIQGFTFSITPTETTSHSTPSFTSSIAATETTSHHTPSFNSVIATSETNSHSAPSFSSLIANTETTSHSTPSFTSLIATTETTSRSTPSYTSAITTTETTSHRTPSFTSSIATESTSPSTAIFTSSITTTETTSNSTASLTSSMTTTETTSHSTPSLTSSMTATETTSHSTPSFTSLIITTETTSHSTPSLTSLITSTETTSHSTPSLTSLITTTETTSHSTPSFTSSITITESISYSNPGFNSSITTTETTSHHTPNFPSSITNTETTSQSTSNFTYSTTTTKTTSHGTPSFTSSNTTTEMTSHSTPSFTSSITTTETTSHSTLNFTCLITTTNSTSHSPPSFTSVSTTTETTSHSTPIFTSSITTTESTSHSTPSFTSSITGIKTISHNTPSFSSLITATETISHSTPSFSSLITTTETISHSTPSFTSLITSTETASHSSPSFTSSITTIETTSHSTPSLTSLITTTKTTSQSPPSFTSSIISTEAASHSTPSFTSSITTTETPSHSTHSFTSLIAITEIISHSTPGLSSSIATTETTSHSTLRFTSVIASTETISYSTPSLNSPITTTEITSHSTPSFNSSITTTETLSHSTPSLTSAITNTETMSHSIPGFTSLITTTETTSNSSPSFTSSITNTKTTSYSPPGFTSSIPATETTSRSPPGFTSSITTTETTSHSTSSLTSSITTKKTISYSPSSFTSSITTTESPSHSTPSLTSLITATKSTTHNPPSFTSAITTTGNTSHSTPIFTSSIATTESTSHSNPSFTSSITSTKSISHSTPSFSSLITTTETTSQSSSSLSSLITTTKYTPYNPPSFTSAITTTGITSHSTPIFTSSITTTETTSHNTSTLTSSITTTETASHSTSSFTSSITSTETTSHSTPSLTSSITATGTTSHSTPSFTSLITITESTSHSTTSFTSSITTTETTSHSTPSFTSLIATTEIISHSTPSYTSSIATTETPSHSTPSFPFSVMTTETISHSTPSLNSAIITTESMSHSIPGFASLITTSETTSHSLPSFTSSSTTTETPSHSPPGFSSSIATSKTISSCPPRFTSAITTTETTSHSTPRFTSAIASTKITSQSTPSLTSLITTTGTSSHSTLGLSSSIATTETTSHSTASFTSSIATTETTSHNTPGFTSLIVTTETSSQSTTSFTSSITTTETTSHTTASITSSITTTEIISRSTPSYTSSIATTETPSHITPSFTSTITTSESTSHSNPSLTSAITTTETRSHSPPIFTSSITTTETTSHNTPSFTSSITTTETTTRSLPGFTFSIATTKTTSHSPPSFTSLITTTETPSHSNPSFTSFITTTESTSHSLPGFTSVIATTKTTLHSTPIFTSSITTAETTSHNPPGFTFLIPTTETISHSPPSFTSSITIIETHSHSNPSFTSLITTTKSTSQTPLGFTSAIATTGITPHSTPIFTSLVATTESTSHSTPSFTSLITSTETISQSTPSFSSLMTATETTSHSTPSLTSLITTIKSASKNPPTFTSAIATTGITSRSTPIFTSSITNTESTSRSTPSFTFSTTSTETTSHSTPSFTSSITTIETTSHSTPSVTYSITTTRTTSHNTPSFTSFIITTESTFHSTTSFASSITTTDNTSHSMPSFTSSIATTEIISHSTPSFPSSITNTETISHRTPSLTSAITTTETMSYSIPGFISSITTTETTSHLPPRFTSLITTTKTTSHSPPSVTSLITRTETTSHSPPSFTSSSTTTETPSHSTPGFSSSIATSKTTSTSPLRFTFVIGTTKTTSYSTPRFTSVIASTKTTSHSTPSLTSLITTTGTSSHSTLGLSSSIVTTETTSHSTASFTSSIATTETVSQNTPGFTSSIATTEITSHSTPSFTSSITTMETTSQSAPSFTSLITVTGSTSHSTASFTSSITTTETTSYSTPSITSSITTTERTSHSTPSYTSSIATRETPSHTVPSFTSSITTTESTSHSNPSLTSAITTTETRSHSPPIFTSSITIIETTSHSTASFTSSMTTTETTSLSPPGFTFSISTTEITSHSTPSFTSSITTTETTSQSSPSFTSLITITGSTSHSTASFTSSITTTETTSHSTRSITSSITTTKRTSHSSLSYTSSIATSETPSHTVPSFTSSITTTDSTSHSNPSLTSAITTTETRSHSPPIFTSSITTIETTSHSTPSFTSLMTTTETTSLSPPAFTFSISTTETNSHSPPSFTSSIATTETPSHSPPSFTSLITTTESTSHSPLSFTSVITTTESTSHSTPSFTSSIATTETTSHTPPSFTSLITTTETPSHSNPSFTSLITATESTSHSPPSFTSAIATTGITSHSTPIFTSLIATTDSTSHSTPSFTSSITSTETISHSTPSFSSLITATKTTSHSTPSLTSLITTTKSTPHNASSFTSVSATTGITSRSTPIFTSSIATTDSTSHSTPSLTSLVTSTETASHSTPSFTSLITTIEATSHSTPSLTSSITTTGTTSHSTPSFTYLTTITESTSHSTPSLTSAITTTETMSHSILGFTPSIISPSTPSYISLIATTETPSHSTPSFPSSITTTQSASHSTPSLTSAISTTEAMSHSIPVFTSLITTTETTSHLPPRFTSLITTTKTTSHSPPSFTALITSTKTTSHSTPSFTSSIATTETTSHSPPSFTSSSTTTETHSHSTPGFSSSIATSKTTSTSPPRFTFAIATTKTTLHSTPRFTLAIASTKTTSHSTPSLTSLITTIETTSHCTPSLTSSITTSGTISHSTPSFTSLITITESTSHSTTSFPSSITTTETTSHSTPSFTSLIATTEIISHSTPSYTSSIATTETPSHSTPSFPFSITTTETIPHSTPSLNSAITTTETMSHSIPGFASSITTSETTSPFPPRFTSLITTTKTTSHSPPSFTASLTSTEATSHSPLSFTSVIASTKITSQSTPSLTSLITTTGTSSHNTLGLSSSVDTTKTTSHSTASFTSLIATTETTSHNTPGFTSSIATTEITSHSTPSFTSSITTMETTSRSSPSFTSLITITGSTSHSTASFTSSITTTETTSHSTPSITSSVTTAERTSHSTPSYAFSIATSETPSHTVPSFTSLITTTESTSHSNPSLTSAITTTETRSHSPPIFTSLITIIETTSHSTRSFTSSITTTVTTSHSPPGFTFSIPTTETTSHSPPSFTSSISITETPSHSPPSFTSFITTTKSTSHGPLSFSSVITTTETTSHSAPSFTSSIATAETTSHSPPGFTFWIPTTETTSHSPPSFTSLITATETASHSNPSSTSSITTTESTSHSPPRSTSAIATTGITSHSTPIFTSSIATTESTSHSTASFTSSITSTETISHSTPSFSSLITATKTTSHSTPSLTSLITTTKSTSQNPPSFTSVIATAGITSRSTPAFTSSITTTESTSQSTPSFTFSTTSTETTSHSTPSLTYLITTTRNNSHSTPSFTSLITITESTSHNTASFTSSITTTGNTSHSMPSFTSSIATTEIISHSTPSYTSSITTTETPSHSSPSFPSTITSTETISHRTPSLTSAITTTETMSHSIPGFISSITITETTSHLSPRFTSLITTTETISHSPPSFTSLTNSTETTSHSPPSFTSSSTTTETPSHSTPGFSSSIATSKTTSTSPPRFTFVIATTKTTSHSTPRFTSVIASTETTSHSTPSLNSLITTTGTSSHSTLGLSSSVTTTKTTSHSTPRFTSVIASTETTSHSTPSLNSLITTTGTSSHSTLGLSSSVTTTKTTSHSTPRFTSVIASTETTSHSTPSLNSLITTTGTSSHSTLGLSSSVTTTKTTSHSTASFTSSIATTETTSQNTPGFTSSIATTEITSHSPPSFTSSSTTTETPSHSTPGFSSSIATSKTTSTSPLRFTFVIGTTKTTSYSTPRFTSVIASTKTTSHSTPSLTSLITTTGTSSHSTFGLSSSIATTETTSHSTASFTSSIATTETMSQNIPGFTSSIATTEITSHSTPSFTSSITTTETTSQSSPSFTSLITITGSTSHSTASFTSSITTTETTSHSTRSITSSITTTKRTSHSTPSYTSSIATSETPSHTVPSFTSLITTTDSTSHSNPSLTSAITTTETRSHSPPIFTSSITTIETTSHSTPSFTSLMTTTETTSLSPPAFTFSISTTETNSHSPPSFTSSIATTETPSHSPPSFTSLITTTESTSHSPLSFTSVITTTESTSHSTPSFTSSIATTETTSHTPPSFTSLITTTETPSHSNPSFTSLITATESTSHSPPSFTSAIATTGITSHSTPIFTSLIATTDSTSHSTPSFTSSITSTETISHSTPSFSSLITATKTTSHSTPSLTSLITTTKSTPHNASSFTSVSATTGITSRSTPIFTSSIATTDSTSHSTPSLTSLVTSTETASHSTPSFTSLITTIEATSHSTPSLTSSITTTGTTSHSTPSFTYLTTITESTSHSTPSLTSAITTTETMSHSILGFTPSIISPSTPSYISLIATTETPSHSTPSFPSSITTTQSASHSTPSLTSAISTTEAMSHSIPVFTSLITTTETTSHLPPRFTSLITTTKTTSHSPPSFTALITSTKTTSHSTPSFTSSIATTETTSHSPPSFTSSSTTTETHSHSTPGFSSSIATSKTTSTSPPRFTFAIATTKTTLHSTPRFTLAIASTKTTSHSTPSLTSLITTIETTSHCTPSLTSSITTSGTISHSTPSFTSLITITESTSHSTTSFPSSITTTETTSHSTPSFTSLIATTEIISHSTPSYTSSIATTETPSHSTPSFPFSITTTETIPHSTPSLNSAITTTETMSHSIPGFASSITTSETTSPFPPRFTSLITTTKTTSHSPPSFTASLTSTEATSHSPLSFTSVIASTKITSQSTPSLTSLITTTGTSSHNTLGLSSSVDTTKTTSHSTASFTSLIATTETTSHNTPGFTSSIATTEITSHSTPSFTSSITTMETTSRSSPSFTSLITITGSTSHSTASFTSSITTTETTSHSTPSITSSVTTAERTSHSTPSYAFSIATSETPSHTVPSFTSLITTTESTSHSNPSLTSAITTTETRSHSPPIFTSLITTTETTSHSTRSFTSSITTTVTTSHSPPGFTFSIPTTETTSHSPPSFTSSISITETPSHSPPSFTSFITTTKSTSHGPLSFSSVITTTETTSHSAPSFTSSIATAETTSHSPPGFTFWIPTTETTSHSPPSFTSLITATETASHSNPSSTSSITTTESTSHSPPRSTSAIATTGITSHSTPIFTSSIATTESTSHSTASFTSSITSTETISHSTPSFSSLITATKTTSHSTPSLTSLITTTKSTSQNPPSFTSAIATAGITSRSTPAFTSSITTTESTSQSTPSFTFSTTSTETTSHSTPSFTSLITTIETTSHSTPSLTYLITTTRNNSHSTPSFTSLITITESTSHNTASFTSSITTTGNTSHSMPSFTSSIATTEIISLSTPSYTSSITTTETPSHSSPSFPSSITSTETISHRTPSLTSAITTTETMSHSIPGFISSITITETTSHLSPRFTSLITTTETISHSPPSFTSLTNSTETTSHSPPSFTSSSTTTETPSHSTPGFSSSIATSKTTSTSPPRFTFVIATTKTTSHSTPRFTSVIASTETTSHSTPSLNSLITTTGTSSHSTLGLSSSVTTTKTTSHSTASFTSSIATTETTSQNTPGFTSSIATTEITSHSTPSFTSSITTTKSTSHSNPSLTSAIVTTETRSHSRPIFTSSITTTETTSHRTPSFTSSIATAETTSHSPPSFTSLITTSETPSHSNPSFTSLITTTESTSHSPPSFTSVISTTGITSHSTLIFTSLIATTKSTSHGTPSFPSSISSTETISHSTPSFSSLITATKTTSHGTPSLTSLIATTKSTPQNPSSFTSAITTRAITSRSTPIFTSSIATIEITSHSTPSFTSSITTTETTSQNSPSFTSLITITGSTSHSTASFTSSITTTETTSHSTPRITSSITTTEKTSHSTPSYTSLIATSEAPSYTVPTFTSSITTTESTSHSNPSLTSAITNTETRSHSPPIFTSLITITETTSHSPPSFTSLITSTETTSHSPPSFTSSSTTTETPSHSTPGFSSSIATSKTISTSPPRFTFAIATTKTTSHSTPKFTSVIASTKTTSQSTPSLNSLITTTGTSSHSTLSLSSLIATTETTSHTTARFSSSIATTETTSHNTPGFTSSIATTEITSDSTPSFTSSVTTTETTSQSSPSFTSLITITGSTSHSSASFTSSITTTETTSHSTPNITSSVTTTERTSHSTPSYTSSIATGETPSHTVPSFTSLITTTKSASHSNPSLSSAIITTETRSHSPPIFTSSITTTETTSHSPPSFTSLITTTETTSRSPPGFTFSISTTETTSHSPPSFTSSITTTETPSHSPPSFTSLITTTESTSHSPLSFTSSIATTESNSYSTPSFTSLITTIQATSHSTPSLPSSITTTGTTSHSPPIFTYLTTITESTSHLSTSFTSSITTNETTSHSMPSFTSSIATTEIILRSTPSYTSSIATSETPSHSTPSFPSSITTTQSISHSTPSLSSAITTTEAMSHSIPGFTSLITTAEATSHLPPRFTSLITTTKTTSHSPPSFTASITSTKTTSHSTPGFTSLIVTTETTSHSSPSFTSSSTTTEIPSHSTPGFSSSIATSKTTSTSPPRFTFAISTTKTTLHSTPRFTLVIASTKTTSHSTPSFSSFITTTETISYSTSSLTSSITTIETTSHCTPSLNSSITTSKTTSHSTPSFTSLITITESTSHSTTSFPSSITTTETTSHSTPSFTSSIATTEIISHGTPSYISSMATTKTPSQSTPSLPSLITTTETISHSTPTLTSVNTTTQTMSHSIPGFTSLITTTETTSHNIPSFSSLITTTETTSHSPPRFTSSITTTKTPSDSTPVFTPSIATSETSSHSTPGYTSSTATTETMSHSTSSFTSSITTTETTSQRSPSFTSLITITESTSHSTARFTSSITTTEIASHSTPSFTSTIATTEIISHSTPSFTSSITTTETLSHSTPSLTPVNTTTETTSNSIPGFTSSITTTKTTSHSTPSFTSSITNTKTSSHSPPGFPSSIPTTETTSHSSPSFISSITATETTSHSTSSLTSSITTNETISHSPPSTSSITTTETPSHSTPSLTSLITTTKSTSHSPSSFTSAIATMRTTSHSTPSFTSSITSPETISHSTPSLNSLITATETISRTTPSFTSLIASTDTASHSTPSFPSSITTIETTAHSTSSLTSSITTTGATSHSTPSFTSLITITEFTSHSTTSFTSSITTTETTSHSTPSITSSIATTEIISHSTPSYTSSITTTETISHSTPSLTSSITTTETISHSTTSLTSAITATETISHSIPGFTSLITTTKTTSHLPPGFTSSIPTTKTTLHNAPSFTSSITGTETTSHSPPHFTSSITRTKTTSHRPPTFTSSITTTESPSHSIPGFSSLIATIETTSTSPPRFISAIATTETTSHSTLGLNSSIANTETTSHSTPGFNPMNATSETTSHSTPSLTFPITTTETTSHSTPGLCSLITTTETTSHSTPCFTSSITTTETTSHSTLIFTSSISTTATPPDSTPSFTSSIATTENTSHSTPSFTSSITTTKTTSQSSPSFTSLITITESTSNSTASFTSSITISETTSDSIPSFTSSIATIKTPSHSTPSFTSSITTTDSISYSTPSLTSAVTTTETTSHSIPGFTSSITSTETTSHSTPSFTSLITTTETTSHSPPSFTSLTTTTETTSHSPPRFTSSITSTETTSKSTPSFTSSISTTESTSHSTARFTSAITSTKTTSHSTSGFTSSNATTETTSHSTPGFSSLIATTGTTSHSTLSFTSLITTTETPLDSTAVFTSSITTSEATSHSTAGFTSSMVTTKTTSHSTPDFTSSIASTKTTSHSTPSFTSSITTTVSISHSTPSITTSIATTEIISHSTPSYASSIATTETPSHTTPSFTSSITTTENISHSTPSLTSVVTTTETRSHSPPSFTSSITTTEINSHSTPSFTSSIATIETTSHSPPGFTSLIPTTKTTLHSPPSFTSSITTTKTTSHSTSSLTSSMPTTKTTSHSPPSFNYLITTTKTPSQSTPSFISSITSTETISHSTPSLNSLITATEIISHTMPSFTSLITSTKTASHSTPSFTSLITTIETTSHSTPSLTSSIITTGTTSQSTPSFTSLITTTESTSHSTSSFTSSITTTETTSQSTPSFTSSIAVTETPSDSTPVFTSIATSETTSHSTASFTSLISTTETTSHSTPMFTSSVATMETTSHSTPSFTSSVTTTEIISHSTPSFTSSITTTEITSHSTPSYTSSIITTKTPSHSTPSFPSSITTTETISHSTPSLTSAITTTETMSHSIPGFTSSITTTETTSYLPPRFTSSIPITETTSYSALSFTSSITSTETTSHSAPNFSSSITSTETTSHSTPSFTSAITSTETTSHSTPILTSPIATTKNISHCTPGFSSSITTTETTSHSTPSFTFSITTTETTSHSTPGFASSITTTKTTSHSTPSFTSSIATSNTTSSSTPGFTSSIATTETTSRSTPGFTSSIVTTETTSPHTPGFTSSITTTETIPQSTPTFTSLITTREMTSHSTPSLTFSITTTKSTSYSPPSFTSSITSTESTSHSTPPFTSSITTNETTSHSTPSFTTSITKTKTTSHSTPSFTSSNSITDSRSHSTPPFTSSVTTPEMTSHNTPSFMSSIITTETTSHSTPSFTSSTIHSTVSSSTTAITSPFTTAETGVTSTPSSPSSLSTDIPTTSLRTLTPLSLSTSTSLTTTTDLPSIPTDISSLPTPIHIISSSPSIQSTETSSLVGTTSPTMSTVRATLRSTENTPISSFSTSIVVTPETPTTQAPPVLMSATGTQTSPVPTTVTFGSMDSSTSTLHTLTPSTALSKIMSTSQFPIPSTHSSTLQTTPSIPSLQTSLTSTSEFTTESFTRGSTSTNAILTSFSTIIWSSTPTIIMSSSPSSASITPVFATTIHSVPSSPYIFSTENVGSASITAFPSLSSSSTTSTSPTSSSLTTALTEITPFSYISLPSTTPCPGTITITIVPASPTDPCVEMDPSTEATSPPTTPLTVFPFTTEMVTCPSSISMQTTLATHMDTSSMTPESESSIIPNASSSTGTGTVPTNTVFTSTRLPTSETWLSNNSVIPTPLPGVSTIPLTMKPSSSLPTILRTSSKSTHPSPPTARTSETSVATTQTPTTLTTCRTTPITSWMTTQSTLTTTAGTCDNGGTWEQGQCACLPGFSGDRCQLQTRCQNGGQWDGLKCQCPSTFYGSSCEFAVEQVDLDVVETEVGMEVSVDQQFSPDLNDNTSQAYRDFNKTFWNQMQKIFADMQGFTFKGVEILSLRNGSIVVDYLVLLEMPFSPQLESEYEQVKTTLKEGLQNASQDANSCQDSQTLCFKPDSIKVNNNSKTELTPEAICRRAAPTGYEEFYFPLVEATRLRCVTKCTSGVDNAIDCHQGQCVLETSGPACRCYSTDTHWFSGPRCEVAVHWRALVGGLTAGAALLVLLLLALGVRAVRSGWWGGQRRGRSWDQDRKWFETWDEEVVGTFSNWGFEDDGTDKDTNFHVALENVDTTMKVHIKRPEMTSSSV.

An N-terminal signal peptide occupies residues 1 to 21 (MQLLGLLSILWMLKSSPGATG). Over residues 219 to 234 (TISSTTRTTERTPLPT) the composition is skewed to low complexity. Disordered stretches follow at residues 219-243 (TISS…TMSP), 327-347 (TRST…TVTD), 360-383 (GTLS…TPMT), 513-559 (SMTT…PSTL), 622-643 (ATTP…STPS), 815-839 (TTTN…TGTG), 923-968 (TSQT…STTE), 1154-1179 (PSMS…TSTL), 1480-1511 (SPTV…STEN), 1529-1601 (SISA…FPET), 1619-1638 (MTST…VTSM), 1692-1714 (TTST…TDSM), 1944-1968 (TTSA…TFTS), 2064-2123 (TPNA…IAKS), 2170-2197 (STSM…SGGI), 2275-2308 (SSSM…AEST), 2442-2462 (RSTP…VKGS), 2476-2497 (LSME…TATT), 2509-2537 (SHST…GPPT), 2591-2610 (SAMS…TETS), 2672-2717 (TSTL…FSSS), 2812-2832 (TTIT…STST), 2845-2867 (TMTE…STTE), 2922-2947 (SRIP…SVGI), 3074-3109 (ETPS…TPDI), 3309-3395 (TTSH…NSNS), 3420-3481 (ITTT…SHST), 3545-3565 (STTS…STPS), 3654-3727 (SITT…STTA), 3740-3812 (ITTI…TTAE), 4014-4047 (TETT…SIAT), 4067-4106 (TSNS…HSTP), 4182-4249 (TTET…SSIT), 4269-4313 (NSTS…PSFT), 4510-4530 (SHST…SHST), 4557-4617 (TETT…STSS), 4630-4651 (YSPS…STPS), 4802-4830 (TSSF…TATG), 4953-4986 (HSLP…KTIS), 5128-5203 (YTSS…ITTT), 5455-5486 (ITNT…PSFT), 5627-5680 (TTKT…ATSK), 5834-5908 (TTSY…HSPP), 5957-5977 (STPS…SSPS), 5990-6017 (HSTA…SSIT), 6030-6080 (TSSI…PPIF), 6120-6150 (TTET…SFTS), 6172-6197 (TEST…HTPP), 6456-6481 (TETP…HSTP), 6541-6598 (TKTT…TSTS), 6846-6867 (TTGT…TKTT), 6946-6971 (ITTT…RTSH), 6999-7021 (TTES…ETRS), 7067-7093 (TTET…HSPP), 7170-7206 (TETA…TTGI), 7225-7244 (SHST…ISHS), 7299-7329 (FTSS…TSHS), 7400-7433 (SYTS…HRTP), 7476-7532 (TETI…TTST), 7578-7600 (TGTS…TTSH), 7731-7766 (TEIT…ATSK), 7922-7996 (SHST…PPIF), 8036-8066 (TTET…SFTS), 8088-8113 (TEST…HTPP), 8372-8397 (TETP…HSTP), 8457-8514 (TKTT…TSTS), 8762-8783 (TTGT…TKTT), 8862-8887 (ITTT…RTSH), 8915-8941 (TTES…HSPP), 8983-9009 (TTET…HSPP), 9052-9122 (AETT…TTGI), 9141-9160 (SHST…ISHS), 9215-9240 (FTSS…TSTE), 9335-9366 (TSSI…HRTP), 9409-9465 (TETI…TTST), 9566-9589 (SHST…NPSL), 9612-9674 (TTET…PPSF), 9734-9760 (TTSH…SSFT), 9828-9859 (TSSI…HSTP), 9883-9908 (TTTE…RSHS), 9921-9973 (TTSH…SKTI), 10076-10099 (SDST…SPSF), 10120-10166 (ITTT…TVPS), 10189-10285 (ITTE…SPLS), 10389-10425 (TSSI…LSSA), 10462-10481 (TTKT…TSTK), 10501-10537 (SHSS…TSTS), 10640-10660 (TTSF…TPSF), 10750-10828 (TTTE…QRSP), 10887-11032 (TTET…SPSS), 11044-11065 (SHST…HSTP), 11276-11317 (TGTE…SPSH), 11446-11482 (STTA…ITTT), 11566-11697 (TTET…PGFS), 11754-11779 (TKTT…HSTP), 11818-11949 (SIAT…HSPP), 12067-12103 (TSSF…STPV), 12186-12220 (PSYT…HSTP), 12280-12323 (TETT…STPI), 12364-12452 (TTET…TTET), 12468-12578 (EMTS…NTPS), 12616-12639 (FTTA…DIPT), 12681-12700 (SSPS…TSPT), 12785-12805 (IPST…LQTS), 12985-13011 (TSSM…TVPT), and 13052-13086 (SLPT…TPTT). Composition is skewed to low complexity over residues 513-538 (SMTT…LSST) and 547-559 (TSHT…PSTL). The span at 1620–1638 (TSTPPITSSVTPTNTVTSM) shows a compositional bias: low complexity. Residues 1944–1956 (TTSATMEPPSSSV) are compositionally biased toward polar residues. Over residues 1957–1968 (AATDTGQTTFTS) the composition is skewed to low complexity. Residues 2066–2091 (NASSMTTSETTYPNSPTGPVTNSMSK) are compositionally biased toward polar residues. Over residues 2096 to 2107 (ASMTQTSSTATS) the composition is skewed to low complexity. The segment covering 2113 to 2123 (PSGSTTEIAKS) has biased composition (polar residues). A compositionally biased stretch (low complexity) spans 2170-2185 (STSMTPSTVSTSIPTS). Polar residues predominate over residues 2186–2195 (QPKTVNSSSG). Low complexity-rich tracts occupy residues 2292 to 2308 (SSPP…AEST) and 2442 to 2458 (RSTP…PTST). Low complexity predominate over residues 2591–2603 (SAMSTSDIPSSPS). 2 stretches are compositionally biased toward low complexity: residues 2929 to 2944 (STDI…TPSS) and 3074 to 3097 (ETPS…TATS). Positions 3098–3109 (PETNTLTPTPDI) are enriched in polar residues. Residues 3309 to 3359 (TTSHSTPSFTSPIATTKTSSHSSPSFTSSIATLETTSHSTPSFTSSITTNS) are compositionally biased toward low complexity. Polar residues predominate over residues 3360–3370 (HSTPRFSSSIA). Residues 3371–3385 (TRETTSHSTSSFTPS) show a composition bias toward low complexity. Over residues 3386–3395 (IATTKTNSNS) the composition is skewed to polar residues. The segment covering 3420–3452 (ITTTETTSHSTPSFTSSMATTKTTSHSTPSFTS) has biased composition (low complexity). Residues 3453–3462 (PIATRETTSH) show a composition bias toward polar residues. Positions 3463 to 3481 (STPSFTSLITTTKTTSHST) are enriched in low complexity. Residues 3740–3749 (ITTIETPSHG) are compositionally biased toward polar residues. Positions 3750-3785 (TPSFTSSITSTETTSHSSPSFISSITTTEITSHSTP) are enriched in low complexity. Positions 3786-3812 (RFTSSITTMETPSHSTPNFTSSITTAE) are enriched in polar residues. 2 stretches are compositionally biased toward low complexity: residues 4020-4042 (STPS…PSFT) and 4067-4096 (TSNS…SSMT). The segment covering 4097–4106 (ATETTSHSTP) has biased composition (polar residues). Low complexity-rich tracts occupy residues 4182–4228 (TTET…PSFT) and 4237–4249 (TSHS…SSIT). The span at 4557 to 4574 (TETTSNSSPSFTSSITNT) shows a compositional bias: low complexity. Residues 4575–4601 (KTTSYSPPGFTSSIPATETTSRSPPGF) show a composition bias toward polar residues. A compositionally biased stretch (low complexity) spans 4602-4617 (TSSITTTETTSHSTSS). Low complexity predominate over residues 4802–4827 (TSSFTSSITSTETTSHSTPSLTSSIT). The segment covering 5137 to 5158 (TPSHITPSFTSTITTSESTSHS) has biased composition (low complexity). Residues 5159–5170 (NPSLTSAITTTE) are compositionally biased toward polar residues. Low complexity-rich tracts occupy residues 5174–5203 (HSPP…ITTT) and 5458–5486 (TEST…PSFT). Over residues 5834–5858 (TTSYSTPSITSSITTTERTSHSTPS) the composition is skewed to low complexity. The span at 5859–5874 (YTSSIATRETPSHTVP) shows a compositional bias: polar residues. Positions 5875–5889 (SFTSSITTTESTSHS) are enriched in low complexity. A compositionally biased stretch (polar residues) spans 5890-5901 (NPSLTSAITTTE). Over residues 6045–6059 (SFTSSITTTDSTSHS) the composition is skewed to low complexity. Residues 6060-6071 (NPSLTSAITTTE) are compositionally biased toward polar residues. A compositionally biased stretch (low complexity) spans 6172–6185 (TESTSHSTPSFTSS). The segment covering 6186–6197 (IATTETTSHTPP) has biased composition (polar residues). Positions 6456 to 6475 (TETPSHSTPSFPSSITTTQS) are enriched in low complexity. The span at 6852 to 6867 (HNTLGLSSSVDTTKTT) shows a compositional bias: polar residues. Positions 6946–6965 (ITTTETTSHSTPSITSSVTT) are enriched in low complexity. The span at 6999-7018 (TTESTSHSNPSLTSAITTTE) shows a compositional bias: polar residues. The span at 7172–7206 (TASHSNPSSTSSITTTESTSHSPPRSTSAIATTGI) shows a compositional bias: low complexity. Composition is skewed to low complexity over residues 7300–7329 (TSSI…TSHS) and 7400–7427 (SYTS…STET). Residues 7476–7491 (TETISHSPPSFTSLTN) show a composition bias toward polar residues. Over residues 7492–7532 (STETTSHSPPSFTSSSTTTETPSHSTPGFSSSIATSKTTST) the composition is skewed to low complexity. Low complexity-rich tracts occupy residues 7734–7766 (TSHS…ATSK) and 7922–7944 (SHST…STPS). Residues 7945-7987 (YTSSIATSETPSHTVPSFTSLITTTDSTSHSNPSLTSAITTTE) are compositionally biased toward polar residues. A compositionally biased stretch (low complexity) spans 8088 to 8101 (TESTSHSTPSFTSS). Residues 8102-8113 (IATTETTSHTPP) show a composition bias toward polar residues. Low complexity predominate over residues 8372 to 8391 (TETPSHSTPSFPSSITTTQS). Residues 8768–8783 (HNTLGLSSSVDTTKTT) show a composition bias toward polar residues. Positions 8862–8881 (ITTTETTSHSTPSITSSVTT) are enriched in low complexity. Over residues 8915–8934 (TTESTSHSNPSLTSAITTTE) the composition is skewed to polar residues. Low complexity-rich tracts occupy residues 9067-9081 (PTTE…SFTS) and 9088-9122 (TASH…TTGI). The span at 9335-9360 (TSSITTTETPSHSSPSFPSSITSTET) shows a compositional bias: low complexity. A compositionally biased stretch (polar residues) spans 9409-9424 (TETISHSPPSFTSLTN). Low complexity-rich tracts occupy residues 9425–9465 (STET…TTST), 9566–9585 (SHST…TSHS), and 9612–9624 (TTET…PSFT). Positions 9625–9661 (SSIATAETTSHSPPSFTSLITTSETPSHSNPSFTSLI) are enriched in polar residues. Over residues 9662 to 9674 (TTTESTSHSPPSF) the composition is skewed to low complexity. 2 stretches are compositionally biased toward polar residues: residues 9892–9903 (NPSLTSAITNTE) and 9921–9933 (TTSH…TSLI). The segment covering 9934 to 9973 (TSTETTSHSPPSFTSSSTTTETPSHSTPGFSSSIATSKTI) has biased composition (low complexity). Low complexity predominate over residues 10120–10130 (ITTTETTSHST). The span at 10131 to 10166 (PNITSSVTTTERTSHSTPSYTSSIATGETPSHTVPS) shows a compositional bias: polar residues. Low complexity-rich tracts occupy residues 10196–10271 (HSPP…SFTS) and 10394–10421 (TSET…STPS). Over residues 10750 to 10791 (TTTETTSHSPPRFTSSITTTKTPSDSTPVFTPSIATSETSSH) the composition is skewed to polar residues. 3 stretches are compositionally biased toward low complexity: residues 10792 to 10828 (STPG…QRSP), 10887 to 10937 (TTET…SSIT), and 10950 to 11032 (PSSI…SPSS). The span at 11278 to 11291 (TETTSHSPPHFTSS) shows a compositional bias: low complexity. Residues 11292–11317 (ITRTKTTSHRPPTFTSSITTTESPSH) are compositionally biased toward polar residues. The segment covering 11566–11682 (TTETTSHSIP…SHSTSGFTSS (117 aa)) has biased composition (low complexity). 2 stretches are compositionally biased toward polar residues: residues 11683–11697 (NATT…PGFS) and 11754–11769 (TKTT…SSIA). Composition is skewed to low complexity over residues 11770 to 11779 (STKTTSHSTP) and 11818 to 11880 (SIAT…SHST). 2 stretches are compositionally biased toward polar residues: residues 11881–11896 (PSFT…TSHS) and 11903–11912 (LIPTTKTTLH). Low complexity-rich tracts occupy residues 11913-11949 (SPPS…HSPP) and 12067-12091 (TSSF…TSSI). Over residues 12092 to 12103 (AVTETPSDSTPV) the composition is skewed to polar residues. Over residues 12280–12309 (TETTSHSAPNFSSSITSTETTSHSTPSFTS) the composition is skewed to low complexity. Residues 12310-12323 (AITSTETTSHSTPI) are compositionally biased toward polar residues. Low complexity predominate over residues 12364–12412 (TTETTSHSTPGFASSITTTKTTSHSTPSFTSSIATSNTTSSSTPGFTSS). Positions 12413–12439 (IATTETTSRSTPGFTSSIVTTETTSPH) are enriched in polar residues. Positions 12440 to 12452 (TPGFTSSITTTET) are enriched in low complexity. The span at 12468–12477 (EMTSHSTPSL) shows a compositional bias: polar residues. 6 stretches are compositionally biased toward low complexity: residues 12478 to 12569 (TFSI…VTTP), 12624 to 12639 (TSTP…DIPT), 12681 to 12692 (SSPSIQSTETSS), 12794 to 12805 (QTTPSIPSLQTS), 12990 to 13003 (PESE…ASSS), and 13073 to 13086 (TSET…TPTT). Positions 13130-13163 (SGDRCQLQTRCQNGGQWDGLKCQCPSTFYGSSCE) constitute an EGF-like domain. Disulfide bonds link cysteine 13134/cysteine 13140 and cysteine 13153/cysteine 13162. Residues 13172 to 13297 (DVVETEVGME…DSIKVNNNSK (126 aa)) form the SEA domain. The chain crosses the membrane as a helical span at residues 13381 to 13401 (LVGGLTAGAALLVLLLLALGV).

Highly O-glycosylated and probably also N-glycosylated. Fetal and adult small intestine and fetal and adult colon.

The protein resides in the membrane. Functionally, major glycoprotein component of a variety of mucus gels. Thought to provide a protective, lubricating barrier against particles and infectious agents at mucosal surfaces. In Homo sapiens (Human), this protein is Mucin-3B.